The chain runs to 634 residues: Glutathione S-transferase C-terminal domain-containing protein (634 aa).

The GST C-terminal domain maps to 131 to 333; it reads LGFKKTCLKA…QEVPKVKTAA (203 aa). Positions 189 to 233 are disordered; sequence RVHNDDKLRRQKLKQQKAAGSEPPSGKGKAKSKASAQKTPKDLAA. Positions 204-226 are enriched in low complexity; the sequence is QKAAGSEPPSGKGKAKSKASAQK.

This sequence belongs to the GSTCD family.

It localises to the cytoplasm. This is Glutathione S-transferase C-terminal domain-containing protein (Gstcd) from Mus musculus (Mouse).